Reading from the N-terminus, the 516-residue chain is Maturase K (516 aa).

The protein belongs to the intron maturase 2 family. MatK subfamily.

It is found in the plastid. The protein resides in the chloroplast. In terms of biological role, usually encoded in the trnK tRNA gene intron. Probably assists in splicing its own and other chloroplast group II introns. This Cypripedium calceolus (Yellow lady's slipper) protein is Maturase K.